The chain runs to 441 residues: Proline--tRNA ligase (441 aa).

It belongs to the class-II aminoacyl-tRNA synthetase family. ProS type 2 subfamily. In terms of assembly, homodimer.

It localises to the cytoplasm. It carries out the reaction tRNA(Pro) + L-proline + ATP = L-prolyl-tRNA(Pro) + AMP + diphosphate. In terms of biological role, catalyzes the attachment of proline to tRNA(Pro) in a two-step reaction: proline is first activated by ATP to form Pro-AMP and then transferred to the acceptor end of tRNA(Pro). The sequence is that of Proline--tRNA ligase from Methylorubrum populi (strain ATCC BAA-705 / NCIMB 13946 / BJ001) (Methylobacterium populi).